A 225-amino-acid polypeptide reads, in one-letter code: GTP-binding nuclear protein Ran (225 aa).

The Small GTPase Ran-type domain occupies 8–172 (VVAEFKLVLV…LWILRKLTGD (165 aa)). 19-26 (DGGVGKTT) serves as a coordination point for GTP. Residues 38–46 (KRYIATQGV) form a switch-I region. GTP-binding positions include Gly69, 123 to 126 (NKVD), and 151 to 153 (SAK). Residues 69–85 (GQEKLGGLREGYYIGAN) are switch-II.

It belongs to the small GTPase superfamily. Ran family. As to quaternary structure, monomer. Found in a nuclear export complex with RanGTP, exportin and pre-miRNA.

The protein localises to the nucleus. Its function is as follows. GTP-binding protein involved in nucleocytoplasmic transport. Required for the import of protein into the nucleus and also for RNA export. Involved in chromatin condensation and control of cell cycle. The protein is GTP-binding nuclear protein Ran of Tetrahymena thermophila.